The chain runs to 106 residues: Large ribosomal subunit protein bL21 (106 aa).

Belongs to the bacterial ribosomal protein bL21 family. In terms of assembly, part of the 50S ribosomal subunit. Contacts protein L20.

This protein binds to 23S rRNA in the presence of protein L20. The chain is Large ribosomal subunit protein bL21 from Coprothermobacter proteolyticus (strain ATCC 35245 / DSM 5265 / OCM 4 / BT).